Consider the following 486-residue polypeptide: Probable transporter MCH1 (486 aa).

A run of 12 helical transmembrane segments spans residues isoleucine 31–tyrosine 51, serine 68–glycine 88, tyrosine 95–phenylalanine 115, glutamate 135–leucine 155, threonine 174–tryptophan 194, valine 211–phenylalanine 231, phenylalanine 268–phenylalanine 288, phenylalanine 312–serine 333, valine 349–phenylalanine 369, valine 377–valine 397, isoleucine 409–alanine 429, and phenylalanine 457–phenylalanine 477.

Belongs to the major facilitator superfamily.

It is found in the vacuole membrane. Functionally, probable transporter. The polypeptide is Probable transporter MCH1 (MCH1) (Yarrowia lipolytica (strain CLIB 122 / E 150) (Yeast)).